The sequence spans 415 residues: Histidine--tRNA ligase (415 aa).

It belongs to the class-II aminoacyl-tRNA synthetase family. In terms of assembly, homodimer.

Its subcellular location is the cytoplasm. It catalyses the reaction tRNA(His) + L-histidine + ATP = L-histidyl-tRNA(His) + AMP + diphosphate + H(+). The protein is Histidine--tRNA ligase of Phytoplasma australiense.